The following is a 220-amino-acid chain: GTP cyclohydrolase 1 (220 aa).

Residues cysteine 109, histidine 112, and cysteine 180 each coordinate Zn(2+).

It belongs to the GTP cyclohydrolase I family. As to quaternary structure, toroid-shaped homodecamer, composed of two pentamers of five dimers.

It catalyses the reaction GTP + H2O = 7,8-dihydroneopterin 3'-triphosphate + formate + H(+). It participates in cofactor biosynthesis; 7,8-dihydroneopterin triphosphate biosynthesis; 7,8-dihydroneopterin triphosphate from GTP: step 1/1. The sequence is that of GTP cyclohydrolase 1 from Yersinia enterocolitica serotype O:8 / biotype 1B (strain NCTC 13174 / 8081).